Consider the following 390-residue polypeptide: Guanine nucleotide-binding protein alpha-7 subunit (390 aa).

2 stretches are compositionally biased toward low complexity: residues 1–12 (MSSTTTNTTTAT) and 22–42 (SSSP…MSPS). The tract at residues 1–42 (MSSTTTNTTTATPAIQVNGNQSSSPQSPSSSTSTLSPPMSPS) is disordered. Residues 70-390 (SELKLLLLGT…TRQTMEEGGI (321 aa)) enclose the G-alpha domain. Residues 73–86 (KLLLLGTGDSGKST) form a G1 motif region. GTP is bound by residues 78–85 (GTGDSGKS), 213–219 (LYTRVAS), 238–242 (DVAGQ), 307–310 (NKRD), and A363. S85 serves as a coordination point for Mg(2+). The interval 211-219 (DILYTRVAS) is G2 motif. The interval 234–243 (FRMIDVAGQR) is G3 motif. The interval 303–310 (ILFLNKRD) is G4 motif. Residues 361–366 (TTATDT) are G5 motif.

Belongs to the G-alpha family. G proteins are composed of 3 units; alpha, beta and gamma. The alpha chain contains the guanine nucleotide binding site.

Functionally, guanine nucleotide-binding proteins (G proteins) are involved as modulators or transducers in various transmembrane signaling systems. The chain is Guanine nucleotide-binding protein alpha-7 subunit (gpaG) from Dictyostelium discoideum (Social amoeba).